Reading from the N-terminus, the 441-residue chain is tRNA modification GTPase MnmE (441 aa).

Arg-21, Glu-79, and Lys-118 together coordinate (6S)-5-formyl-5,6,7,8-tetrahydrofolate. The 154-residue stretch at 214–367 (GIHITILGAP…LVAELARVVE (154 aa)) folds into the TrmE-type G domain. GTP-binding positions include 224 to 229 (NAGKSS), 243 to 249 (SAQAGTT), and 268 to 271 (DTAG). 2 residues coordinate Mg(2+): Ser-228 and Thr-249. Lys-441 is a (6S)-5-formyl-5,6,7,8-tetrahydrofolate binding site.

This sequence belongs to the TRAFAC class TrmE-Era-EngA-EngB-Septin-like GTPase superfamily. TrmE GTPase family. As to quaternary structure, homodimer. Heterotetramer of two MnmE and two MnmG subunits. K(+) serves as cofactor.

The protein localises to the cytoplasm. Exhibits a very high intrinsic GTPase hydrolysis rate. Involved in the addition of a carboxymethylaminomethyl (cmnm) group at the wobble position (U34) of certain tRNAs, forming tRNA-cmnm(5)s(2)U34. The chain is tRNA modification GTPase MnmE from Paramagnetospirillum magneticum (strain ATCC 700264 / AMB-1) (Magnetospirillum magneticum).